Here is a 716-residue protein sequence, read N- to C-terminus: ATP-dependent DNA helicase DinG (716 aa).

The Helicase ATP-binding domain occupies 17–294 (ALQEQIPDFI…TCMEQFRPKT (278 aa)). 54-61 (APTGVGKT) is an ATP binding site. Residue C120 participates in [4Fe-4S] cluster binding. A DEAH box motif is present at residues 131-134 (EPTQ). Residues C194, C199, and C205 each contribute to the [4Fe-4S] cluster site. The DEAH box signature appears at 248-251 (DEGH). A Helicase C-terminal domain is found at 517-698 (HIAEMAAFFR…VFPIEQPEVP (182 aa)).

Belongs to the helicase family. DinG subfamily. Type 1 sub-subfamily. It depends on [4Fe-4S] cluster as a cofactor.

It catalyses the reaction Couples ATP hydrolysis with the unwinding of duplex DNA at the replication fork by translocating in the 5'-3' direction. This creates two antiparallel DNA single strands (ssDNA). The leading ssDNA polymer is the template for DNA polymerase III holoenzyme which synthesizes a continuous strand.. The catalysed reaction is ATP + H2O = ADP + phosphate + H(+). DNA-dependent ATPase and 5'-3' DNA helicase. Unwinds D-loops, R-loops, forked DNA and G-quadruplex DNA. In Escherichia coli O6:H1 (strain CFT073 / ATCC 700928 / UPEC), this protein is ATP-dependent DNA helicase DinG.